Consider the following 273-residue polypeptide: Glutamate racemase (273 aa).

Substrate contacts are provided by residues 9-10 (DS) and 41-42 (YG). The active-site Proton donor/acceptor is Cys73. 74-75 (NT) lines the substrate pocket. The active-site Proton donor/acceptor is Cys183. A substrate-binding site is contributed by 184 to 185 (TH).

This sequence belongs to the aspartate/glutamate racemases family.

The enzyme catalyses L-glutamate = D-glutamate. It functions in the pathway cell wall biogenesis; peptidoglycan biosynthesis. Functionally, provides the (R)-glutamate required for cell wall biosynthesis. The sequence is that of Glutamate racemase from Shewanella sp. (strain ANA-3).